The primary structure comprises 305 residues: Protein EXORDIUM-like 2 (305 aa).

An N-terminal signal peptide occupies residues M1–A23. A glycan (N-linked (GlcNAc...) asparagine) is linked at N44.

This sequence belongs to the EXORDIUM family.

It is found in the secreted. The protein resides in the extracellular space. It localises to the apoplast. May play a role in a brassinosteroid-dependent regulation of growth and development. This chain is Protein EXORDIUM-like 2 (EXL2), found in Arabidopsis thaliana (Mouse-ear cress).